Consider the following 591-residue polypeptide: V-type ATP synthase alpha chain (591 aa).

ATP is bound at residue 242–249 (GPFGAGKT).

It belongs to the ATPase alpha/beta chains family.

The catalysed reaction is ATP + H2O + 4 H(+)(in) = ADP + phosphate + 5 H(+)(out). In terms of biological role, produces ATP from ADP in the presence of a proton gradient across the membrane. The V-type alpha chain is a catalytic subunit. The protein is V-type ATP synthase alpha chain (atpA) of Chlamydia muridarum (strain MoPn / Nigg).